The sequence spans 382 residues: Histidinol-phosphate aminotransferase (382 aa).

Residues 1–24 (MTSAPRPRPTLDDLPLREDLRGKS) form a disordered region. Residues 9-22 (PTLDDLPLREDLRG) show a composition bias toward basic and acidic residues. K233 is subject to N6-(pyridoxal phosphate)lysine.

Belongs to the class-II pyridoxal-phosphate-dependent aminotransferase family. Histidinol-phosphate aminotransferase subfamily. Homodimer. Pyridoxal 5'-phosphate serves as cofactor.

It carries out the reaction L-histidinol phosphate + 2-oxoglutarate = 3-(imidazol-4-yl)-2-oxopropyl phosphate + L-glutamate. Its pathway is amino-acid biosynthesis; L-histidine biosynthesis; L-histidine from 5-phospho-alpha-D-ribose 1-diphosphate: step 7/9. The protein is Histidinol-phosphate aminotransferase of Mycobacterium ulcerans (strain Agy99).